A 285-amino-acid chain; its full sequence is RNA 5'-monophosphate methyltransferase (285 aa).

S-adenosyl-L-methionine is bound by residues Arg46, Asn77, Asp111, 136-137 (DI), and Met165. Positions 53–275 (ELLRQLFPPE…KHTHETQAIP (223 aa)) constitute a Bin3-type SAM domain.

Belongs to the methyltransferase superfamily. Interacts with DICER1; the interaction may be mediated by RNA.

Its subcellular location is the cytoplasm. It catalyses the reaction a 5'-end 5'-phospho-ribonucleoside-RNA + S-adenosyl-L-methionine = a 5'-end (5'-methylphospho)-ribonucleoside-RNA + S-adenosyl-L-homocysteine. It carries out the reaction a 5'-end 5'-phospho-ribonucleoside-RNA + 2 S-adenosyl-L-methionine = a 5'-end (5'-bismethylphospho)-ribonucleoside-RNA + 2 S-adenosyl-L-homocysteine. O-methyltransferase that specifically monomethylates 5'-monophosphate of cytoplasmic histidyl tRNA (tRNA(His)), acting as a capping enzyme by protecting tRNA(His) from cleavage by DICER1. Also able, with less efficiently, to methylate the 5' monophosphate of a subset of pre-miRNAs, acting as a negative regulator of miRNA processing. The 5' monophosphate of pre-miRNAs is recognized by DICER1 and is required for pre-miRNAs processing: methylation at this position reduces the processing of pre-miRNAs by DICER1. Was also reported to mediate dimethylation of pre-miR-145; however dimethylation cannot be reproduced by another group which observes a monomethylation of pre-miR-145. The polypeptide is RNA 5'-monophosphate methyltransferase (Mus musculus (Mouse)).